The sequence spans 878 residues: Alanine--tRNA ligase (878 aa).

Zn(2+) contacts are provided by His-568, His-572, Cys-670, and His-674.

The protein belongs to the class-II aminoacyl-tRNA synthetase family. Zn(2+) is required as a cofactor.

The protein resides in the cytoplasm. The enzyme catalyses tRNA(Ala) + L-alanine + ATP = L-alanyl-tRNA(Ala) + AMP + diphosphate. Functionally, catalyzes the attachment of alanine to tRNA(Ala) in a two-step reaction: alanine is first activated by ATP to form Ala-AMP and then transferred to the acceptor end of tRNA(Ala). Also edits incorrectly charged Ser-tRNA(Ala) and Gly-tRNA(Ala) via its editing domain. The protein is Alanine--tRNA ligase of Latilactobacillus sakei subsp. sakei (strain 23K) (Lactobacillus sakei subsp. sakei).